A 78-amino-acid polypeptide reads, in one-letter code: Large ribosomal subunit protein eL20 (78 aa).

Belongs to the eukaryotic ribosomal protein eL20 family. Part of the 50S ribosomal subunit. Binds 23S rRNA.

The polypeptide is Large ribosomal subunit protein eL20 (Pyrobaculum arsenaticum (strain DSM 13514 / JCM 11321 / PZ6)).